Here is a 157-residue protein sequence, read N- to C-terminus: Ribonuclease H (157 aa).

In terms of domain architecture, RNase H type-1 spans 3-144 (NSKTVHLYTD…CDELARDAAT (142 aa)). Residues Asp-12, Glu-50, Asp-72, and Asp-136 each contribute to the Mg(2+) site.

It belongs to the RNase H family. Monomer. Mg(2+) is required as a cofactor.

The protein resides in the cytoplasm. The enzyme catalyses Endonucleolytic cleavage to 5'-phosphomonoester.. In terms of biological role, endonuclease that specifically degrades the RNA of RNA-DNA hybrids. The chain is Ribonuclease H from Idiomarina loihiensis (strain ATCC BAA-735 / DSM 15497 / L2-TR).